A 131-amino-acid polypeptide reads, in one-letter code: Arsenate reductase (131 aa).

Catalysis depends on nucleophile residues cysteine 10, cysteine 82, and cysteine 89. 2 disulfides stabilise this stretch: cysteine 10/cysteine 82 and cysteine 82/cysteine 89.

It belongs to the low molecular weight phosphotyrosine protein phosphatase family. Thioredoxin-coupled ArsC subfamily.

Its subcellular location is the cytoplasm. The enzyme catalyses arsenate + [thioredoxin]-dithiol + H(+) = arsenite + [thioredoxin]-disulfide + H2O. Its function is as follows. Catalyzes the reduction of arsenate [As(V)] to arsenite [As(III)]. The protein is Arsenate reductase of Staphylococcus xylosus.